A 307-amino-acid polypeptide reads, in one-letter code: Pseudouridine-5'-phosphate glycosidase (307 aa).

Glu-28 (proton donor) is an active-site residue. Residues Lys-89 and Val-109 each coordinate substrate. Position 141 (Asp-141) interacts with Mn(2+). Position 143 to 145 (143 to 145 (SAD)) interacts with substrate. Lys-162 acts as the Nucleophile in catalysis.

The protein belongs to the pseudouridine-5'-phosphate glycosidase family. In terms of assembly, homotrimer. The cofactor is Mn(2+).

The catalysed reaction is D-ribose 5-phosphate + uracil = psi-UMP + H2O. In terms of biological role, catalyzes the reversible cleavage of pseudouridine 5'-phosphate (PsiMP) to ribose 5-phosphate and uracil. Functions biologically in the cleavage direction, as part of a pseudouridine degradation pathway. In Alkaliphilus metalliredigens (strain QYMF), this protein is Pseudouridine-5'-phosphate glycosidase.